Consider the following 590-residue polypeptide: Hyaluronan synthase 1 (590 aa).

The Cytoplasmic segment spans residues 1 to 31 (MKDKAAATMEIPEDPGIPKNLERKRPIVWRM). The chain crosses the membrane as a helical span at residues 32-52 (IYYSFAVLLLAAFTAAYVTEF). Over 53–60 (QILTHEDV) the chain is Extracellular. A helical transmembrane segment spans residues 61-81 (LFSLGLYGLVMFLHLMMQSLF). Residues 82–401 (AYLEIRRINK…YNAQWWYKHH (320 aa)) lie on the Cytoplasmic side of the membrane. A helical transmembrane segment spans residues 402–422 (IWMTYESVVHFIFPFFITATV). The Extracellular segment spans residues 423-425 (IRL). A helical transmembrane segment spans residues 426-446 (LYASTIWNVVWLLLCIQIMSV). Topologically, residues 447–456 (LKSLYACWLR) are cytoplasmic. Residues 457-477 (GNPIMLLMSLYSMLYMTGLLP) form a helical membrane-spanning segment. Over 478–505 (SKYFAMLTINKSGWGTSGRKKIVGNYMP) the chain is Extracellular. A helical transmembrane segment spans residues 506–526 (VLPLSIWMAVLCGGVGYSIYM). Residues 527 to 543 (DCHQDWSTPEKQKELYH) are Cytoplasmic-facing. Residues 544–564 (LLYGCISYTLYWVLMALMYWV) form a helical membrane-spanning segment. Residues 565–588 (WVKRCCRKRSQTVTLVHDIPERLV) are Extracellular-facing.

Belongs to the NodC/HAS family. Mg(2+) is required as a cofactor.

The protein localises to the membrane. It carries out the reaction [hyaluronan](n) + UDP-N-acetyl-alpha-D-glucosamine = N-acetyl-beta-D-glucosaminyl-(1-&gt;4)-[hyaluronan](n) + UDP + H(+). It catalyses the reaction N-acetyl-beta-D-glucosaminyl-(1-&gt;4)-[hyaluronan](n) + UDP-alpha-D-glucuronate = [hyaluronan](n+1) + UDP + H(+). It functions in the pathway glycan biosynthesis; hyaluronan biosynthesis. Catalyzes the addition of GlcNAc or GlcUA monosaccharides to the nascent hyaluronan polymer. Therefore, it is essential to hyaluronan synthesis a major component of most extracellular matrices that has a structural role in tissues architectures and regulates cell adhesion, migration and differentiation. Also able to catalyze the synthesis of chito-oligosaccharide depending on the substrate. The polypeptide is Hyaluronan synthase 1 (has1) (Xenopus tropicalis (Western clawed frog)).